We begin with the raw amino-acid sequence, 408 residues long: Argininosuccinate synthase (408 aa).

Residues 11-19 and Ala38 each bind ATP; that span reads AYSGGLDTS. Residues Tyr91 and Ser96 each coordinate L-citrulline. Position 121 (Gly121) interacts with ATP. L-aspartate-binding residues include Thr123, Asn127, and Asp128. An L-citrulline-binding site is contributed by Asn127. Residues Arg131, Ser182, Ser191, Glu267, and Tyr279 each contribute to the L-citrulline site.

The protein belongs to the argininosuccinate synthase family. Type 1 subfamily. Homotetramer.

It is found in the cytoplasm. It carries out the reaction L-citrulline + L-aspartate + ATP = 2-(N(omega)-L-arginino)succinate + AMP + diphosphate + H(+). The protein operates within amino-acid biosynthesis; L-arginine biosynthesis; L-arginine from L-ornithine and carbamoyl phosphate: step 2/3. The polypeptide is Argininosuccinate synthase (Paracoccus denitrificans (strain Pd 1222)).